Consider the following 343-residue polypeptide: N-acetyl-gamma-glutamyl-phosphate reductase (343 aa).

C149 is an active-site residue.

This sequence belongs to the NAGSA dehydrogenase family. Type 1 subfamily.

Its subcellular location is the cytoplasm. The enzyme catalyses N-acetyl-L-glutamate 5-semialdehyde + phosphate + NADP(+) = N-acetyl-L-glutamyl 5-phosphate + NADPH + H(+). Its pathway is amino-acid biosynthesis; L-arginine biosynthesis; N(2)-acetyl-L-ornithine from L-glutamate: step 3/4. Its function is as follows. Catalyzes the NADPH-dependent reduction of N-acetyl-5-glutamyl phosphate to yield N-acetyl-L-glutamate 5-semialdehyde. The chain is N-acetyl-gamma-glutamyl-phosphate reductase from Methanococcus maripaludis (strain C5 / ATCC BAA-1333).